The following is a 298-amino-acid chain: Acetylglutamate kinase (298 aa).

Substrate is bound by residues 69 to 70, R91, and N196; that span reads GG.

Belongs to the acetylglutamate kinase family. ArgB subfamily.

The protein localises to the cytoplasm. It carries out the reaction N-acetyl-L-glutamate + ATP = N-acetyl-L-glutamyl 5-phosphate + ADP. Its pathway is amino-acid biosynthesis; L-arginine biosynthesis; N(2)-acetyl-L-ornithine from L-glutamate: step 2/4. In terms of biological role, catalyzes the ATP-dependent phosphorylation of N-acetyl-L-glutamate. This is Acetylglutamate kinase from Nitrobacter hamburgensis (strain DSM 10229 / NCIMB 13809 / X14).